A 270-amino-acid chain; its full sequence is Phosphatidate cytidylyltransferase (270 aa).

The next 7 membrane-spanning stretches (helical) occupy residues 19-39, 53-73, 76-96, 101-121, 126-146, 183-203, and 248-268; these read LWLT…IGLA, TAFS…LLIL, GALL…VTQW, GWPA…SLLR, FGFT…IAAY, LVAS…ALLL, and ALLY…AIFF.

It belongs to the CDS family.

The protein localises to the cell inner membrane. The catalysed reaction is a 1,2-diacyl-sn-glycero-3-phosphate + CTP + H(+) = a CDP-1,2-diacyl-sn-glycerol + diphosphate. Its pathway is phospholipid metabolism; CDP-diacylglycerol biosynthesis; CDP-diacylglycerol from sn-glycerol 3-phosphate: step 3/3. The polypeptide is Phosphatidate cytidylyltransferase (cdsA) (Brucella melitensis biotype 1 (strain ATCC 23456 / CCUG 17765 / NCTC 10094 / 16M)).